The sequence spans 799 residues: DNA ligase (799 aa).

The span at 1–11 (MTEVKTGRVVD) shows a compositional bias: basic and acidic residues. Residues 1 to 35 (MTEVKTGRVVDDAPVNDAPENNAAEATSPARHDAI) are disordered. Residues 67 to 71 (DAEYD), 116 to 117 (SL), and D147 each bind NAD(+). K149 (N6-AMP-lysine intermediate) is an active-site residue. R170, E207, K327, and K351 together coordinate NAD(+). Zn(2+)-binding residues include C445, C448, C463, and C468. The 90-residue stretch at 634 to 723 (AIVLPLQGLK…VASVDASEAV (90 aa)) folds into the BRCT domain. The segment at 720–799 (SEAVAEETPP…RGRAEQLKLF (80 aa)) is disordered. Over residues 755 to 767 (GSASGDDSRGAAA) the composition is skewed to low complexity. The span at 787-799 (DVPRGRAEQLKLF) shows a compositional bias: basic and acidic residues.

It belongs to the NAD-dependent DNA ligase family. LigA subfamily. The cofactor is Mg(2+). Mn(2+) is required as a cofactor.

It carries out the reaction NAD(+) + (deoxyribonucleotide)n-3'-hydroxyl + 5'-phospho-(deoxyribonucleotide)m = (deoxyribonucleotide)n+m + AMP + beta-nicotinamide D-nucleotide.. Functionally, DNA ligase that catalyzes the formation of phosphodiester linkages between 5'-phosphoryl and 3'-hydroxyl groups in double-stranded DNA using NAD as a coenzyme and as the energy source for the reaction. It is essential for DNA replication and repair of damaged DNA. This Nitratidesulfovibrio vulgaris (strain ATCC 29579 / DSM 644 / CCUG 34227 / NCIMB 8303 / VKM B-1760 / Hildenborough) (Desulfovibrio vulgaris) protein is DNA ligase.